Consider the following 516-residue polypeptide: uncharacterized protein (516 aa).

The signal sequence occupies residues methionine 1 to threonine 17. 2 disordered regions span residues lysine 29–arginine 197 and arginine 296–leucine 426. Residues arginine 71–serine 85 are compositionally biased toward basic and acidic residues. The span at valine 122 to serine 144 shows a compositional bias: pro residues. The span at proline 145–valine 155 shows a compositional bias: low complexity. The segment covering lysine 351 to proline 367 has biased composition (basic and acidic residues). Residues serine 394–proline 406 show a composition bias toward low complexity. Over residues alanine 415–leucine 426 the composition is skewed to basic and acidic residues.

This is an uncharacterized protein from Treponema pallidum (strain Nichols).